Reading from the N-terminus, the 368-residue chain is 4-hydroxy-3-methylbut-2-en-1-yl diphosphate synthase (flavodoxin) (368 aa).

[4Fe-4S] cluster contacts are provided by cysteine 268, cysteine 271, cysteine 303, and glutamate 310.

This sequence belongs to the IspG family. [4Fe-4S] cluster is required as a cofactor.

It carries out the reaction (2E)-4-hydroxy-3-methylbut-2-enyl diphosphate + oxidized [flavodoxin] + H2O + 2 H(+) = 2-C-methyl-D-erythritol 2,4-cyclic diphosphate + reduced [flavodoxin]. It functions in the pathway isoprenoid biosynthesis; isopentenyl diphosphate biosynthesis via DXP pathway; isopentenyl diphosphate from 1-deoxy-D-xylulose 5-phosphate: step 5/6. In terms of biological role, converts 2C-methyl-D-erythritol 2,4-cyclodiphosphate (ME-2,4cPP) into 1-hydroxy-2-methyl-2-(E)-butenyl 4-diphosphate. The polypeptide is 4-hydroxy-3-methylbut-2-en-1-yl diphosphate synthase (flavodoxin) (Listeria monocytogenes serotype 4b (strain CLIP80459)).